A 419-amino-acid chain; its full sequence is RING finger protein 150 (419 aa).

The N-terminal stretch at 1–34 is a signal peptide; sequence MALSVIQACRSLALSTWLLSFCFVHLLCLDFTVA. Topologically, residues 35–197 are extracellular; the sequence is EKEEWYTAFV…NLQKYVSRTS (163 aa). One can recognise a PA domain in the interval 70–172; the sequence is SLKREARGVL…PKGRELVLLM (103 aa). Residues 198-218 form a helical membrane-spanning segment; that stretch reads VVFVSISFIILMIISLAWLVF. Residues 219-419 are Cytoplasmic-facing; it reads YYIQRFRYAN…IDTPTDDPKC (201 aa). The segment at 267–308 adopts an RING-type; atypical zinc-finger fold; that stretch reads CAVCIEGYKPNDVVRILPCRHLFHKCCVDPWLVDHRTCPMCK. Positions 374–419 are disordered; that stretch reads SEPLSQDTMPTEQSELQPIASGSSDVSLTTGAGHSDIDTPTDDPKC. The span at 376–405 shows a compositional bias: polar residues; the sequence is PLSQDTMPTEQSELQPIASGSSDVSLTTGA.

It localises to the membrane. The polypeptide is RING finger protein 150 (rnf150) (Danio rerio (Zebrafish)).